We begin with the raw amino-acid sequence, 132 residues long: Large ribosomal subunit protein uL24 (132 aa).

The protein belongs to the universal ribosomal protein uL24 family. As to quaternary structure, part of the 50S ribosomal subunit.

In terms of biological role, one of two assembly initiator proteins, it binds directly to the 5'-end of the 23S rRNA, where it nucleates assembly of the 50S subunit. One of the proteins that surrounds the polypeptide exit tunnel on the outside of the subunit. In Aquifex aeolicus (strain VF5), this protein is Large ribosomal subunit protein uL24.